The following is a 116-amino-acid chain: Ribosome-binding factor A (116 aa).

The protein belongs to the RbfA family. Monomer. Binds 30S ribosomal subunits, but not 50S ribosomal subunits or 70S ribosomes.

The protein resides in the cytoplasm. Functionally, one of several proteins that assist in the late maturation steps of the functional core of the 30S ribosomal subunit. Associates with free 30S ribosomal subunits (but not with 30S subunits that are part of 70S ribosomes or polysomes). Required for efficient processing of 16S rRNA. May interact with the 5'-terminal helix region of 16S rRNA. This is Ribosome-binding factor A from Clostridium perfringens (strain 13 / Type A).